The sequence spans 309 residues: Homoserine kinase (309 aa).

Position 95–105 (95–105 (PQSRGLGSSAA)) interacts with ATP.

Belongs to the GHMP kinase family. Homoserine kinase subfamily.

It is found in the cytoplasm. It carries out the reaction L-homoserine + ATP = O-phospho-L-homoserine + ADP + H(+). The protein operates within amino-acid biosynthesis; L-threonine biosynthesis; L-threonine from L-aspartate: step 4/5. Its function is as follows. Catalyzes the ATP-dependent phosphorylation of L-homoserine to L-homoserine phosphate. This chain is Homoserine kinase, found in Corynebacterium glutamicum (strain R).